Here is a 375-residue protein sequence, read N- to C-terminus: 23S rRNA (uracil(747)-C(5))-methyltransferase RlmC (375 aa).

Residues Cys3, Cys11, Cys14, and Cys87 each coordinate [4Fe-4S] cluster. Positions 212, 241, 262, and 307 each coordinate S-adenosyl-L-methionine. Cys334 acts as the Nucleophile in catalysis.

The protein belongs to the class I-like SAM-binding methyltransferase superfamily. RNA M5U methyltransferase family. RlmC subfamily.

It catalyses the reaction uridine(747) in 23S rRNA + S-adenosyl-L-methionine = 5-methyluridine(747) in 23S rRNA + S-adenosyl-L-homocysteine + H(+). Its function is as follows. Catalyzes the formation of 5-methyl-uridine at position 747 (m5U747) in 23S rRNA. The polypeptide is 23S rRNA (uracil(747)-C(5))-methyltransferase RlmC (Salmonella typhi).